Consider the following 283-residue polypeptide: 4-diphosphocytidyl-2-C-methyl-D-erythritol kinase (283 aa).

Residue Lys-10 is part of the active site. An ATP-binding site is contributed by 95–105; the sequence is PVAAGLGGGSS. Asp-137 is a catalytic residue.

The protein belongs to the GHMP kinase family. IspE subfamily.

The catalysed reaction is 4-CDP-2-C-methyl-D-erythritol + ATP = 4-CDP-2-C-methyl-D-erythritol 2-phosphate + ADP + H(+). It participates in isoprenoid biosynthesis; isopentenyl diphosphate biosynthesis via DXP pathway; isopentenyl diphosphate from 1-deoxy-D-xylulose 5-phosphate: step 3/6. In terms of biological role, catalyzes the phosphorylation of the position 2 hydroxy group of 4-diphosphocytidyl-2C-methyl-D-erythritol. This Limosilactobacillus reuteri (strain DSM 20016) (Lactobacillus reuteri) protein is 4-diphosphocytidyl-2-C-methyl-D-erythritol kinase.